We begin with the raw amino-acid sequence, 240 residues long: MQAARGGAGRPGREGRGLERECERSPGVGAAMPPGPCAWPPRAALRLWLGCVCFALVQADSPSAPVNVTVRHLKANSAVVSWDVLEDEVVIGFAISQQKKDVRMLRFIQEVNTTTRSCALWDLEEDTEYIVHVQAISIQGQSPASEPVLFKTPREAEKMASKNKDEVTMKEMGRNQQLRTGEVLIIVVVLFMWAGVIALFCRQYDIIKDNEPNNNKEKTKSASETSTPEHQGGGLLRSKI.

Gly residues predominate over residues Met-1 to Arg-10. Residues Met-1–Ala-30 form a disordered region. Positions Pro-11–Arg-24 are enriched in basic and acidic residues. The region spanning Ala-64 to Glu-155 is the Fibronectin type-III domain. Asn-67 and Asn-112 each carry an N-linked (GlcNAc...) asparagine glycan. The chain crosses the membrane as a helical span at residues Gly-181 to Cys-201. Basic and acidic residues predominate over residues Asn-210–Ser-221. The disordered stretch occupies residues Asn-210–Ile-240. A compositionally biased stretch (gly residues) spans Gln-231–Ile-240. The Microbody targeting signal motif lies at Ser-238–Ile-240.

As to quaternary structure, dimer; may exist in other oligomeric forms. Post-translationally, N-Glycosylated. In terms of processing, the extracellular domain is cleaved and released from the cell membrane.

The protein localises to the cell membrane. Its subcellular location is the peroxisome membrane. It localises to the secreted. Functionally, mediates beneficial effects of muscular exercise. Induces browning of white adipose tissue by stimulating UCP1 expression, at least in part, via the nuclear receptor PPARA. This Rattus norvegicus (Rat) protein is Fibronectin type III domain-containing protein 5 (Fndc5).